The chain runs to 247 residues: 5-oxoprolinase subunit A (247 aa).

Belongs to the LamB/PxpA family. In terms of assembly, forms a complex composed of PxpA, PxpB and PxpC.

It carries out the reaction 5-oxo-L-proline + ATP + 2 H2O = L-glutamate + ADP + phosphate + H(+). Its function is as follows. Catalyzes the cleavage of 5-oxoproline to form L-glutamate coupled to the hydrolysis of ATP to ADP and inorganic phosphate. This is 5-oxoprolinase subunit A from Vibrio vulnificus (strain CMCP6).